The primary structure comprises 160 residues: Cytochrome b6-f complex subunit 4 (160 aa).

3 helical membrane-spanning segments follow: residues 36-56, 95-115, and 131-151; these read LLYI…GLAV, LLGV…PFPE, and TVFS…ALPI.

It belongs to the cytochrome b family. PetD subfamily. The 4 large subunits of the cytochrome b6-f complex are cytochrome b6, subunit IV (17 kDa polypeptide, petD), cytochrome f and the Rieske protein, while the 4 small subunits are petG, petL, petM and petN. The complex functions as a dimer.

It is found in the plastid. Its subcellular location is the chloroplast thylakoid membrane. Its function is as follows. Component of the cytochrome b6-f complex, which mediates electron transfer between photosystem II (PSII) and photosystem I (PSI), cyclic electron flow around PSI, and state transitions. This is Cytochrome b6-f complex subunit 4 from Huperzia lucidula (Shining clubmoss).